Here is a 406-residue protein sequence, read N- to C-terminus: Olfactomedin-like protein 3 (406 aa).

Positions 1–21 (MGPSAPLLLFFLLSWPGSLQG) are cleaved as a signal peptide. A coiled-coil region spans residues 22–101 (QQHHLVEYME…REVDYLETQN (80 aa)). One can recognise an Olfactomedin-like domain in the interval 134–401 (DCSYTISQVR…QIVYKLEMKK (268 aa)). A disulfide bond links Cys135 and Cys328. Residue Asn248 is glycosylated (N-linked (GlcNAc...) asparagine).

The protein belongs to the OLFML3 family.

The protein localises to the secreted. Its function is as follows. Secreted scaffold protein that plays an essential role in dorsoventral patterning during early development. Stabilizes axial formation by restricting chordin (CHRD) activity on the dorsal side. Acts by facilitating the association between the tolloid proteases and their substrate chordin (CHRD), leading to enhance chordin (CHRD) degradation. May have matrix-related function involved in placental and embryonic development, or play a similar role in other physiological processes. The sequence is that of Olfactomedin-like protein 3 (Olfml3) from Rattus norvegicus (Rat).